Here is a 301-residue protein sequence, read N- to C-terminus: Probable 2-dehydro-3-deoxy-D-pentonate aldolase YjhH (301 aa).

Residues threonine 46 and tyrosine 109 each act as charge relay system in the active site. Tyrosine 135 (proton donor) is an active-site residue. Catalysis depends on lysine 164, which acts as the Schiff-base intermediate with substrate.

It belongs to the DapA family.

It is found in the cytoplasm. It catalyses the reaction 2-dehydro-3-deoxy-D-arabinonate = glycolaldehyde + pyruvate. Functions as a 2-dehydro-3-deoxy-D-pentonate aldolase. This is Probable 2-dehydro-3-deoxy-D-pentonate aldolase YjhH (yjhH) from Escherichia coli (strain K12).